We begin with the raw amino-acid sequence, 294 residues long: Dof zinc finger protein DOF4.1 (294 aa).

The segment at 68–122 adopts a Dof-type zinc-finger fold; the sequence is RNCPRCNSSNTKFCYYNNYSLAQPRYLCKSCRRYWTEGGSLRNVPVGGGSRKNKK. Cys-70, Cys-73, Cys-95, and Cys-98 together coordinate Zn(2+). 2 disordered regions span residues 109-178 and 247-294; these read RNVP…DKRA and MYPY…GPTW. Polar residues-rich tracts occupy residues 126-136 and 157-173; these read PNSSTSSSTKN and KTHQ…SSPM. Positions 251–273 are enriched in basic and acidic residues; the sequence is GDHEDRQQHHHVRHDDGNKKREG. The segment covering 284 to 294 has biased composition (gly residues); it reads ILGGDSGGPTW.

The protein localises to the nucleus. In terms of biological role, transcription factor that binds specifically to a 5'-AA[AG]G-3' consensus core sequence. The chain is Dof zinc finger protein DOF4.1 (DOF4.1) from Arabidopsis thaliana (Mouse-ear cress).